A 176-amino-acid chain; its full sequence is RNA pyrophosphohydrolase (176 aa).

The region spanning 6 to 149 (GYRPNVGIVI…KRDVYRRVMK (144 aa)) is the Nudix hydrolase domain. The Nudix box signature appears at 38–59 (GGINPGESPEQAMYRELFEEVG).

The protein belongs to the Nudix hydrolase family. RppH subfamily. A divalent metal cation serves as cofactor.

In terms of biological role, accelerates the degradation of transcripts by removing pyrophosphate from the 5'-end of triphosphorylated RNA, leading to a more labile monophosphorylated state that can stimulate subsequent ribonuclease cleavage. The chain is RNA pyrophosphohydrolase from Proteus mirabilis (strain HI4320).